The following is a 190-amino-acid chain: Ribonuclease HII (190 aa).

The RNase H type-2 domain maps to 3–190; that stretch reads KLIAGVDEVG…KPVKALLEEK (188 aa). A divalent metal cation contacts are provided by aspartate 9, glutamate 10, and aspartate 101.

It belongs to the RNase HII family. Mn(2+) serves as cofactor. Mg(2+) is required as a cofactor.

The protein localises to the cytoplasm. The enzyme catalyses Endonucleolytic cleavage to 5'-phosphomonoester.. Functionally, endonuclease that specifically degrades the RNA of RNA-DNA hybrids. The protein is Ribonuclease HII of Alteromonas mediterranea (strain DSM 17117 / CIP 110805 / LMG 28347 / Deep ecotype).